The chain runs to 336 residues: Ribosomal RNA large subunit methyltransferase F (336 aa).

Belongs to the methyltransferase superfamily. METTL16/RlmF family.

It localises to the cytoplasm. The enzyme catalyses adenosine(1618) in 23S rRNA + S-adenosyl-L-methionine = N(6)-methyladenosine(1618) in 23S rRNA + S-adenosyl-L-homocysteine + H(+). Functionally, specifically methylates the adenine in position 1618 of 23S rRNA. The protein is Ribosomal RNA large subunit methyltransferase F of Yersinia pestis bv. Antiqua (strain Angola).